The sequence spans 262 residues: Lipoate-protein ligase A subunit 1 (262 aa).

Residues 30 to 226 (YGDKPILRFY…GFSETLHIDF (197 aa)) form the BPL/LPL catalytic domain. ATP contacts are provided by Arg72, Gly77, Tyr80, Asp85, Pro132, and Lys135. Residues Thr137 and Asp138 each contribute to the Mg(2+) site. ATP-binding residues include Lys145, Ala149, and Ala163. (R)-lipoate is bound at residue Lys145. Residue Ala149 participates in Mg(2+) binding.

This sequence belongs to the LplA family. As to quaternary structure, heterodimer composed of LplA and LplB.

The protein localises to the cytoplasm. The catalysed reaction is L-lysyl-[lipoyl-carrier protein] + (R)-lipoate + ATP = N(6)-[(R)-lipoyl]-L-lysyl-[lipoyl-carrier protein] + AMP + diphosphate + H(+). The protein operates within protein modification; protein lipoylation via exogenous pathway; protein N(6)-(lipoyl)lysine from lipoate: step 1/2. It participates in protein modification; protein lipoylation via exogenous pathway; protein N(6)-(lipoyl)lysine from lipoate: step 2/2. Part of a lipoate-protein ligase complex that catalyzes both the ATP-dependent activation of exogenously supplied lipoate to lipoyl-AMP and the transfer of the activated lipoyl onto the lipoyl domains of lipoate-dependent enzymes. Can also use octanoate as substrate. The chain is Lipoate-protein ligase A subunit 1 (lplA) from Thermoplasma acidophilum (strain ATCC 25905 / DSM 1728 / JCM 9062 / NBRC 15155 / AMRC-C165).